Here is a 156-residue protein sequence, read N- to C-terminus: SsrA-binding protein (156 aa).

A disordered region spans residues 130-156; sequence KFDKRDDLKKKDAKRDIDRALRDKQKY. A compositionally biased stretch (basic and acidic residues) spans 132 to 156; that stretch reads DKRDDLKKKDAKRDIDRALRDKQKY.

Belongs to the SmpB family.

It localises to the cytoplasm. Required for rescue of stalled ribosomes mediated by trans-translation. Binds to transfer-messenger RNA (tmRNA), required for stable association of tmRNA with ribosomes. tmRNA and SmpB together mimic tRNA shape, replacing the anticodon stem-loop with SmpB. tmRNA is encoded by the ssrA gene; the 2 termini fold to resemble tRNA(Ala) and it encodes a 'tag peptide', a short internal open reading frame. During trans-translation Ala-aminoacylated tmRNA acts like a tRNA, entering the A-site of stalled ribosomes, displacing the stalled mRNA. The ribosome then switches to translate the ORF on the tmRNA; the nascent peptide is terminated with the 'tag peptide' encoded by the tmRNA and targeted for degradation. The ribosome is freed to recommence translation, which seems to be the essential function of trans-translation. In Exiguobacterium sibiricum (strain DSM 17290 / CCUG 55495 / CIP 109462 / JCM 13490 / 255-15), this protein is SsrA-binding protein.